The sequence spans 211 residues: Histidine biosynthesis bifunctional protein HisIE (211 aa).

The segment at 1-122 is phosphoribosyl-AMP cyclohydrolase; it reads MSFKAAEVSS…DAQEESQMVW (122 aa). The tract at residues 123–211 is phosphoribosyl-ATP pyrophosphohydrolase; sequence LHQLEQLLAA…VVNKLKERHK (89 aa).

The protein in the N-terminal section; belongs to the PRA-CH family. In the C-terminal section; belongs to the PRA-PH family.

It localises to the cytoplasm. It carries out the reaction 1-(5-phospho-beta-D-ribosyl)-ATP + H2O = 1-(5-phospho-beta-D-ribosyl)-5'-AMP + diphosphate + H(+). It catalyses the reaction 1-(5-phospho-beta-D-ribosyl)-5'-AMP + H2O = 1-(5-phospho-beta-D-ribosyl)-5-[(5-phospho-beta-D-ribosylamino)methylideneamino]imidazole-4-carboxamide. Its pathway is amino-acid biosynthesis; L-histidine biosynthesis; L-histidine from 5-phospho-alpha-D-ribose 1-diphosphate: step 2/9. It participates in amino-acid biosynthesis; L-histidine biosynthesis; L-histidine from 5-phospho-alpha-D-ribose 1-diphosphate: step 3/9. The chain is Histidine biosynthesis bifunctional protein HisIE from Vibrio parahaemolyticus serotype O3:K6 (strain RIMD 2210633).